A 2280-amino-acid polypeptide reads, in one-letter code: Protein Ycf2 (2280 aa).

1631–1638 contacts ATP; that stretch reads GSIGTGRS.

Belongs to the Ycf2 family.

The protein resides in the plastid. The protein localises to the chloroplast stroma. Probable ATPase of unknown function. Its presence in a non-photosynthetic plant (Epifagus virginiana) and experiments in tobacco indicate that it has an essential function which is probably not related to photosynthesis. This is Protein Ycf2 (ycf2-A) from Nicotiana tabacum (Common tobacco).